We begin with the raw amino-acid sequence, 313 residues long: 2,3-dihydroxyphenylpropionate/2,3-dihydroxicinnamic acid 1,2-dioxygenase (313 aa).

The active-site Proton donor is histidine 115. Histidine 179 serves as the catalytic Proton acceptor.

This sequence belongs to the LigB/MhpB extradiol dioxygenase family. In terms of assembly, homotetramer. Requires Fe(2+) as cofactor.

It catalyses the reaction 3-(2,3-dihydroxyphenyl)propanoate + O2 = (2Z,4E)-2-hydroxy-6-oxonona-2,4-dienedioate + H(+). The enzyme catalyses (2E)-3-(2,3-dihydroxyphenyl)prop-2-enoate + O2 = (2Z,4E,7E)-2-hydroxy-6-oxonona-2,4,7-trienedioate + H(+). It participates in aromatic compound metabolism; 3-phenylpropanoate degradation. In terms of biological role, catalyzes the non-heme iron(II)-dependent oxidative cleavage of 2,3-dihydroxyphenylpropionic acid and 2,3-dihydroxicinnamic acid into 2-hydroxy-6-ketononadienedioate and 2-hydroxy-6-ketononatrienedioate, respectively. In Mycobacterium ulcerans (strain Agy99), this protein is 2,3-dihydroxyphenylpropionate/2,3-dihydroxicinnamic acid 1,2-dioxygenase.